The primary structure comprises 734 residues: PI-PLC X-box domain-containing protein DDB_G0293730 (734 aa).

Residues 8-70 (IKNILLKIEK…ELNEKLIVEK (63 aa)) adopt a coiled-coil conformation. In terms of domain architecture, PI-PLC X-box spans 440-604 (KLKDRKVRNL…CIYDDLVNPL (165 aa)).

This chain is PI-PLC X-box domain-containing protein DDB_G0293730, found in Dictyostelium discoideum (Social amoeba).